The sequence spans 105 residues: Nucleoid-associated protein lin2851 (105 aa).

A compositionally biased stretch (low complexity) spans 1–16 (MRGMGNMQGMMKQMQK). The segment at 1-23 (MRGMGNMQGMMKQMQKMQKEMAK) is disordered.

This sequence belongs to the YbaB/EbfC family. As to quaternary structure, homodimer.

The protein resides in the cytoplasm. It is found in the nucleoid. Its function is as follows. Binds to DNA and alters its conformation. May be involved in regulation of gene expression, nucleoid organization and DNA protection. This chain is Nucleoid-associated protein lin2851, found in Listeria innocua serovar 6a (strain ATCC BAA-680 / CLIP 11262).